A 413-amino-acid polypeptide reads, in one-letter code: DNA primase large subunit PriL (413 aa).

4 residues coordinate [4Fe-4S] cluster: Cys230, Cys301, Cys310, and Cys317. Basic and acidic residues-rich tracts occupy residues 340–356 (MEKE…QEEK), 362–381 (KEKQ…EEKG), and 388–413 (KKRE…KKRI). The interval 340–413 (MEKEKEEKEE…KEKQEEKKRI (74 aa)) is disordered.

Belongs to the eukaryotic-type primase large subunit family. Heterodimer of a small subunit (PriS) and a large subunit (PriL). [4Fe-4S] cluster is required as a cofactor.

Its function is as follows. Regulatory subunit of DNA primase, an RNA polymerase that catalyzes the synthesis of short RNA molecules used as primers for DNA polymerase during DNA replication. Stabilizes and modulates the activity of the small subunit, increasing the rate of DNA synthesis, and conferring RNA synthesis capability. The DNA polymerase activity may enable DNA primase to also catalyze primer extension after primer synthesis. May also play a role in DNA repair. This chain is DNA primase large subunit PriL, found in Methanosarcina barkeri (strain Fusaro / DSM 804).